Reading from the N-terminus, the 912-residue chain is Tiger protein E1 (912 aa).

The first 22 residues, 1 to 22 (MKLKHLTIFLFIFIYRFLFVKS), serve as a signal peptide directing secretion. Topologically, residues 23–815 (DCYLINNERP…YSENKSSGFP (793 aa)) are extracellular. N-linked (GlcNAc...) asparagine glycans are attached at residues N54, N108, N164, N183, N232, N268, N323, N356, N398, N407, N568, N637, N653, N658, N706, N716, N763, N774, N781, and N809. IPT/TIG domains follow at residues 532–609 (SSDQ…GPFT) and 612–686 (PVIE…PLII). The region spanning 715-796 (TNTSDIDQTA…DGQYFIAQIF (82 aa)) is the IPT/TIG 3 domain. A helical transmembrane segment spans residues 816–836 (NEMYIGIVAIIIFLALIFFAI). The Cytoplasmic segment spans residues 837–912 (KTQVEKYIEE…IRCCFKEHTD (76 aa)).

Its subcellular location is the cell membrane. This Dictyostelium discoideum (Social amoeba) protein is Tiger protein E1 (tgrE1).